Here is a 142-residue protein sequence, read N- to C-terminus: MKTFMAKKEEIKREWYVVDAKGKVLGRLASEIAKILRGKHKPIYTPHVDTGDFVIVVNAKDVVLTGKKEQQKIYFFHSGYPGGHRLISAKDMRAKSPEKMIYLAVKGMLPKGPLGRKMLKKLKVYAGPEHPHQAQKPKELNI.

This sequence belongs to the universal ribosomal protein uL13 family. Part of the 50S ribosomal subunit.

Its function is as follows. This protein is one of the early assembly proteins of the 50S ribosomal subunit, although it is not seen to bind rRNA by itself. It is important during the early stages of 50S assembly. In Dictyoglomus thermophilum (strain ATCC 35947 / DSM 3960 / H-6-12), this protein is Large ribosomal subunit protein uL13.